The sequence spans 393 residues: Na(+)/H(+) antiporter NhaA (393 aa).

A run of 11 helical transmembrane segments spans residues 14–34 (AAGM…NWSV), 60–80 (LLLW…GLEV), 96–116 (MLPL…FLLF), 125–145 (AGWA…LTLL), 155–175 (VFLL…IALF), 179–199 (QVFW…AYMN), 218–238 (VCIL…GFFI), 263–283 (FLIV…GIVL), 292–312 (LGIA…FSWL), 330–350 (IVAV…ITLL), and 362–382 (YAKL…YLAL).

It belongs to the NhaA Na(+)/H(+) (TC 2.A.33) antiporter family.

It is found in the cell inner membrane. The enzyme catalyses Na(+)(in) + 2 H(+)(out) = Na(+)(out) + 2 H(+)(in). Functionally, na(+)/H(+) antiporter that extrudes sodium in exchange for external protons. The chain is Na(+)/H(+) antiporter NhaA from Pectobacterium atrosepticum (strain SCRI 1043 / ATCC BAA-672) (Erwinia carotovora subsp. atroseptica).